Consider the following 211-residue polypeptide: FMN-dependent NADH:quinone oxidoreductase 2 (211 aa).

Residue 102 to 105 (MWNF) coordinates FMN.

Belongs to the azoreductase type 1 family. Homodimer. The cofactor is FMN.

It catalyses the reaction 2 a quinone + NADH + H(+) = 2 a 1,4-benzosemiquinone + NAD(+). The catalysed reaction is N,N-dimethyl-1,4-phenylenediamine + anthranilate + 2 NAD(+) = 2-(4-dimethylaminophenyl)diazenylbenzoate + 2 NADH + 2 H(+). In terms of biological role, quinone reductase that provides resistance to thiol-specific stress caused by electrophilic quinones. Its function is as follows. Also exhibits azoreductase activity. Catalyzes the reductive cleavage of the azo bond in aromatic azo compounds to the corresponding amines. This is FMN-dependent NADH:quinone oxidoreductase 2 from Bacillus cereus (strain ATCC 14579 / DSM 31 / CCUG 7414 / JCM 2152 / NBRC 15305 / NCIMB 9373 / NCTC 2599 / NRRL B-3711).